Consider the following 644-residue polypeptide: MQGFLRSLFFGVKKIPKRFAPLVEKGVLKEALQSNKDRYLLKEGFDIGKIERVKNKAFFISLAKNYPKDPLIKNLPPSFKTDALILCQIECSKKRPIAFFKAALLNADHAMIAYLAKEKNQIVAIPFKEPFKKPISLKHSQRSLLELPRHCVVKIDLKKREISEILGALEDPLIDENLSLSLFDRIKDFSKDCLDLAQYYAQLKASDFKDRINYSHIPFITIDPKDAKDFDDAIFYDKEKNTLFVAVADVSEFVPKHSSLDKEARIRGFSVYFPNSVYPMLPLSLSQGACSLKAFEKRLALVYEIPLDNLKNARLSQGVIEVRANCAYEEINHFLNTQQSSLGKDLQQSLLGFLEVALKLKKERLKKGFNFNSFENKLYLNEEGRIEKIETEKESGAHTLIEEAMLLANQSSARLLDGHFHNRGIYRTHKEPSLEQQKRLYDKLFDYEIVRPKNMGFFPFLEHALKISQEKSIEREVSRLIIKSQNLALYSPMQESHFGLGFASYTHFTSPIRRYSDLALHRLLKELLFHQAKGCSYLLEETPELCAELNALQKKAALIERDFIKRKFARLALEFLEKEFLGVVLEAKDWVVVGLKEFIGLKVLIKTNKVFKPLEKVRIKITHADLILGQVRGEITERIKEHVS.

One can recognise an RNB domain in the interval 211–529 (RINYSHIPFI…LHRLLKELLF (319 aa)). An S1 motif domain is found at 573-644 (LEFLEKEFLG…ITERIKEHVS (72 aa)).

Belongs to the RNR ribonuclease family. RNase R subfamily.

Its subcellular location is the cytoplasm. It carries out the reaction Exonucleolytic cleavage in the 3'- to 5'-direction to yield nucleoside 5'-phosphates.. Functionally, 3'-5' exoribonuclease that releases 5'-nucleoside monophosphates and is involved in maturation of structured RNAs. This chain is Ribonuclease R, found in Helicobacter pylori (strain J99 / ATCC 700824) (Campylobacter pylori J99).